Reading from the N-terminus, the 427-residue chain is Glutamate-1-semialdehyde 2,1-aminomutase (427 aa).

Residue Lys-265 is modified to N6-(pyridoxal phosphate)lysine.

This sequence belongs to the class-III pyridoxal-phosphate-dependent aminotransferase family. HemL subfamily. Homodimer. It depends on pyridoxal 5'-phosphate as a cofactor.

The protein localises to the cytoplasm. The catalysed reaction is (S)-4-amino-5-oxopentanoate = 5-aminolevulinate. Its pathway is porphyrin-containing compound metabolism; protoporphyrin-IX biosynthesis; 5-aminolevulinate from L-glutamyl-tRNA(Glu): step 2/2. The sequence is that of Glutamate-1-semialdehyde 2,1-aminomutase from Shewanella amazonensis (strain ATCC BAA-1098 / SB2B).